A 477-amino-acid polypeptide reads, in one-letter code: C4-dicarboxylate transport protein 1 (477 aa).

8 helical membrane passes run 21–39 (PYVQ…GHFY), 59–76 (MIIA…IAGM), 89–111 (AMVY…GNVI), 162–179 (ILQV…LAMV), 200–221 (LVGI…FTIG), 231–253 (LAML…LGAV), 342–364 (VLLL…AGFV), and 368–387 (ATLS…ILGV). The disordered stretch occupies residues 435 to 477 (SAGQPLITPAPSNSAASLPVESPGWSQTPDDRAAGSKQTLAGR).

It belongs to the dicarboxylate/amino acid:cation symporter (DAACS) (TC 2.A.23) family.

The protein localises to the cell inner membrane. In terms of biological role, responsible for the transport of dicarboxylates such as succinate, fumarate, and malate from the periplasm across the membrane. This transport system plays an important role in the energy supply of rhizobium-legume symbionts. The chain is C4-dicarboxylate transport protein 1 (dctA1) from Mesorhizobium japonicum (strain LMG 29417 / CECT 9101 / MAFF 303099) (Mesorhizobium loti (strain MAFF 303099)).